The chain runs to 2411 residues: Polyprotein P1234 (2411 aa).

The Alphavirus-like MT domain occupies 30 to 257; the sequence is EAVQTTPNDH…ESRKLLQSWH (228 aa). The tract at residues 242–261 is nsP1 membrane-binding; it reads GSTLYTESRKLLQSWHLPST. Residues Cys-415 and Cys-417 are each lipidated (S-palmitoyl cysteine; by host). The (+)RNA virus helicase ATP-binding domain occupies 688–840; sequence ELVNPPFHEF…HDICSEVFHK (153 aa). 719–726 serves as a coordination point for a ribonucleoside 5'-triphosphate; sequence GVPGSGKS. Residues 841 to 989 form the (+)RNA virus helicase C-terminal domain; that stretch reads SISRRCTQDI…IAEWEAEHQG (149 aa). Positions 1002–1325 constitute a Peptidase C9 domain; the sequence is NTFMNKVNVC…RKANSIFQNT (324 aa). A nucleolus localization signal region spans residues 1003–1022; that stretch reads TFMNKVNVCWAKTLTPVLET. The For cysteine protease nsP2 activity role is filled by Cys-1011. Positions 1056–1065 match the Nuclear export signal motif; that stretch reads TKMYGFDLDT. Residue His-1081 is the For cysteine protease nsP2 activity of the active site. A Nuclear localization signal motif is present at residues 1180 to 1184; the sequence is PNKKI. A Macro domain is found at 1332–1491; sequence APAYRVKRGD…KIKEAIDHRT (160 aa). ADP-D-ribose contacts are provided by Asp-1341, Asn-1355, Gly-1363, Gly-1443, Ile-1444, and Tyr-1445. Residues Cys-1593, Cys-1595, Cys-1618, and Cys-1636 each contribute to the Zn(2+) site. Residues 1681–1720 form a disordered region; sequence DSSIGSLPVGDTRPIPAPRTIFRPVPAPRAPVLRTTPPPK. Short sequence motifs (FGDF; binding to host G3BP1) lie at residues 1760 to 1763 and 1778 to 1781; these read FGDF. One can recognise a RdRp catalytic domain in the interval 2165 to 2280; sequence DHVLETDIAS…HGIISDKLMA (116 aa).

Interacts with non-structural protein 3. Interacts with RNA-directed RNA polymerase nsP4. Interacts with protease nsP2. interacts with itself. As to quaternary structure, interacts with mRNA-capping enzyme nsP1. Interacts with host DDX1. Interacts with host DDX3. Interacts (via C-terminus) with host G3BP1; this interaction inhibits the formation of host stress granules on viral mRNAs and the nsp3-G3BP1 complexes bind viral RNAs and probably orchestrate the assembly of viral replication complexes. Interacts (via C-terminus) with host G3BP2; this interaction inhibits the formation of host stress granules on viral mRNAs and the nsp3-G3BP2 complexes bind viral RNAs and probably orchestrate the assembly of viral replication complexes. In terms of assembly, interacts with mRNA-capping enzyme nsP1. Interacts with protease nsP2. interacts with itself. Interacts with RNA-directed RNA polymerase nsP4. Interacts with mRNA-capping enzyme nsP1. Interacts with KPNA1/karyopherin-alpha1; this interaction probably allows the active transport of protease nsP2 into the host nucleus. It depends on Mg(2+) as a cofactor. Requires Mn(2+) as cofactor. Specific enzymatic cleavages in vivo yield mature proteins. The processing of the polyprotein is temporally regulated. In early stages (1.7 hpi), P1234 is first cleaved in trans through its nsP2 protease activity, releasing P123' and nsP4, which associate to form the early replication complex. At the same time, P1234 is also cut at the nsP1/nsP2 site early in infection but with lower efficiency. After replication of the viral minus-strand RNAs (4 hpi), the polyproteins are cut at the nsP1/nsP2 and nsP2/nsP3 sites very efficiently, preventing accumulation of P123' and P1234 and allowing the formation of the late replication complex. NsP3'/nsP4 site is not cleaved anymore and P34 is produced rather than nsP4. In terms of processing, specific enzymatic cleavages in vivo yield mature proteins. The processing of the polyprotein is temporally regulated. In early stages (1.7 hpi), P123 is cleaved at the nsP1/nsP2 site with low efficiency. After replication of the viral minus-strand RNAs (4 hpi), the polyproteins are cut at the nsP1/nsP2 and nsP2/nsP3 sites very efficiently, preventing accumulation of P123 and allowing the formation of the late replication complex. Post-translationally, specific enzymatic cleavages in vivo yield mature proteins. The processing of the polyprotein is temporally regulated. In early stages (1.7 hpi), P123' is cleaved at the nsP1/nsP2 site with low efficiency. After replication of the viral minus-strand RNAs (4 hpi), the polyproteins are cut at the nsP1/nsP2 and nsP2/nsP3 sites very efficiently, preventing accumulation of P123' and allowing the formation of the late replication complex. Palmitoylated by host palmitoyltransferases ZDHHC2 and ZDHHC19. In terms of processing, phosphorylated by host on serines and threonines. Post-translationally, ubiquitinated; targets the protein for rapid degradation via the ubiquitin system. Nsp4 is present in extremely low quantities due to low frequency of translation through the amber stop-codon and the degradation by the ubiquitin pathway.

It localises to the host cytoplasmic vesicle membrane. The protein resides in the host cell membrane. The protein localises to the host cell projection. It is found in the host filopodium. Its subcellular location is the host nucleus. It localises to the host cytoplasm. It catalyses the reaction GTP + S-adenosyl-L-methionine = N(7)-methyl-GTP + S-adenosyl-L-homocysteine. It carries out the reaction N(7)-methyl-GTP + L-histidyl-[protein] = N(tele)-(N(7)-methylguanosine 5'-phospho)-L-histidyl-[protein] + diphosphate. The enzyme catalyses N(tele)-(N(7)-methylguanosine 5'-phospho)-L-histidyl-[protein] + a 5'-end diphospho-(purine-ribonucleoside) in mRNA + H(+) = a 5'-end (N(7)-methyl 5'-triphosphoguanosine)-(purine-ribonucleoside) in mRNA + L-histidyl-[protein]. The catalysed reaction is a 5'-end triphospho-ribonucleoside in mRNA + H2O = a 5'-end diphospho-ribonucleoside in mRNA + phosphate + H(+). It catalyses the reaction a ribonucleoside 5'-triphosphate + H2O = a ribonucleoside 5'-diphosphate + phosphate + H(+). It carries out the reaction ATP + H2O = ADP + phosphate + H(+). The enzyme catalyses RNA(n) + a ribonucleoside 5'-triphosphate = RNA(n+1) + diphosphate. The catalysed reaction is RNA(n) + ATP = RNA(n)-3'-adenine ribonucleotide + diphosphate. It catalyses the reaction 4-O-(ADP-D-ribosyl)-L-aspartyl-[protein] + H2O = L-aspartyl-[protein] + ADP-D-ribose + H(+). It carries out the reaction 5-O-(ADP-D-ribosyl)-L-glutamyl-[protein] + H2O = L-glutamyl-[protein] + ADP-D-ribose + H(+). The enzyme catalyses ADP-alpha-D-ribose 1''-phosphate + H2O = ADP-D-ribose + phosphate. Its function is as follows. Inactive precursor of the viral replicase, which is activated by cleavages carried out by the viral protease nsP2. The early replication complex formed by the polyprotein P123 and nsP4 synthesizes minus-strand RNAs. As soon P123 is cleaved into mature proteins, the plus-strand RNAs synthesis begins. In terms of biological role, the early replication complex formed by the polyprotein P123' and nsP4 synthesizes minus-strand RNAs. Polyprotein P123' is a short-lived polyprotein that accumulates during early stage of infection. As soon P123' is cleaved into mature proteins, the plus-strand RNAs synthesis begins. Functionally, cytoplasmic capping enzyme that catalyzes two virus-specific reactions: methyltransferase and nsP1 guanylyltransferase. mRNA-capping is necessary since all viral RNAs are synthesized in the cytoplasm, and host capping enzymes are restricted to the nucleus. The enzymatic reaction involves a covalent link between 7-methyl-GMP and nsP1, whereas eukaryotic capping enzymes form a covalent complex only with GMP. nsP1 capping consists in the following reactions: GTP is first methylated into 7-methyl-GMP and then is covalently linked to nsP1 to form the m7GMp-nsP1 complex from which 7-methyl-GMP complex is transferred to the mRNA to create the cap structure. NsP1 is needed for the initiation of the minus-strand RNAs synthesis. Probably serves as a membrane anchor for the replication complex composed of nsP1-nsP4. Palmitoylated nsP1 is remodeling host cell cytoskeleton, and induces filopodium-like structure formation at the surface of the host cell. Its function is as follows. Multifunctional protein whose N-terminus is part of the RNA polymerase complex and displays NTPase, RNA triphosphatase and helicase activities. NTPase and RNA triphosphatase are involved in viral RNA capping and helicase keeps a check on the dsRNA replication intermediates. The C-terminus harbors a protease that specifically cleaves the polyproteins and releases the mature proteins. Required for the shutoff of minus-strand RNAs synthesis. Specifically inhibits the host IFN response by promoting the nuclear export of host STAT1. Also inhibits host transcription by inducing rapid proteasome-dependent degradation of POLR2A, a catalytic subunit of the RNAPII complex. The resulting inhibition of cellular protein synthesis serves to ensure maximal viral gene expression and to evade host immune response. Seems to be essential for minus-strand RNAs and subgenomic 26S mRNAs synthesis. Displays mono-ADP-ribosylhydrolase activity. ADP-ribosylation is a post-translational modification that controls various processes of the host cell and the virus probably needs to revert it for optimal viral replication. Binds proteins of FXR family and sequesters them into the viral RNA replication complexes thereby inhibiting the formation of host stress granules on viral mRNAs. The nsp3-FXR complexes bind viral RNAs and probably orchestrate the assembly of viral replication complexes, thanks to the ability of FXR family members to self-assemble and bind DNA. In terms of biological role, seems to be essential for minus-strand RNAs and subgenomic 26S mRNAs synthesis. Displays mono-ADP-ribosylhydrolase activity. ADP-ribosylation is a post-translantional modification that controls various processes of the host cell and the virus probably needs to revert it for optimal viral replication. Binds proteins of G3BP family and sequesters them into the viral RNA replication complexes thereby inhibiting the formation of host stress granules on viral mRNAs. The nsp3'-G3BP complexes bind viral RNAs and probably orchestrate the assembly of viral replication complexes, thanks to the ability of G3BP family members to self-assemble and bind DNA. Functionally, RNA dependent RNA polymerase. Replicates genomic and antigenomic RNA by recognizing replications specific signals. The early replication complex formed by the polyprotein P123 and nsP4 synthesizes minus-strand RNAs. The late replication complex composed of fully processed nsP1-nsP4 is responsible for the production of genomic and subgenomic plus-strand RNAs. The core catalytic domain of nsP4 also possesses terminal adenylyltransferase (TATase) activity that is probably involved in maintenance and repair of the poly(A) tail, an element required for replication of the viral genome. This is Polyprotein P1234 from Barmah forest virus (BFV).